We begin with the raw amino-acid sequence, 801 residues long: Ribosome biogenesis protein ERB1 (801 aa).

Disordered stretches follow at residues 1–135 (MGSK…LEDR) and 358–377 (PEYLPTKEEREEWEKMDPED). Over residues 35 to 90 (SEDEEDYIPSSEVDEDDDDDADESASEDSDDSNDSEDDEVEEDDEALLSDEIPSEG) the composition is skewed to acidic residues. Composition is skewed to basic and acidic residues over residues 91–113 (ESEKDQDLAESKESKQDQDKEPS), 124–135 (PPRKEDEELEDR), and 362–377 (PTKEEREEWEKMDPED). WD repeat units lie at residues 451–490 (GHEGRVRSVAIDPTGVALATGGDDGTVRVWELLTGRQVWS) and 494–534 (NGDE…VTPA). Residues 546-570 (GFGHATNGKQQANLPPGKEPPGKWA) are disordered. 5 WD repeats span residues 586 to 628 (TVRS…TQIP), 631 to 669 (KLNGLAQTASFHPLRPLFFVATQRSIRCYDLQKLELVKI), 672 to 711 (PGAKWISSFDVHPGGDNLVVGSYDKRLLWHDLDLSNRPYK), 715 to 755 (FHTE…DQLE), and 771 to 801 (VNKLGVLDIDWHPREPWCVSAGADGTARLWM).

It belongs to the WD repeat BOP1/ERB1 family. Component of the NOP7 complex, composed of ERB1, NOP7 and YTM1. The complex is held together by ERB1, which interacts with NOP7 via its N-terminal domain and with YTM1 via a high-affinity interaction between the seven-bladed beta-propeller domains of the 2 proteins. The NOP7 complex associates with the 66S pre-ribosome.

It is found in the nucleus. It localises to the nucleolus. The protein resides in the nucleoplasm. Component of the NOP7 complex, which is required for maturation of the 25S and 5.8S ribosomal RNAs and formation of the 60S ribosome. This Chaetomium thermophilum (strain DSM 1495 / CBS 144.50 / IMI 039719) (Thermochaetoides thermophila) protein is Ribosome biogenesis protein ERB1.